A 202-amino-acid polypeptide reads, in one-letter code: Dephospho-CoA kinase (202 aa).

Residues 6–202 (KVSITGDLSS…EYFYALKGAL (197 aa)) enclose the DPCK domain. Residue 14-19 (SSGKTE) participates in ATP binding.

It belongs to the CoaE family.

It localises to the cytoplasm. The enzyme catalyses 3'-dephospho-CoA + ATP = ADP + CoA + H(+). The protein operates within cofactor biosynthesis; coenzyme A biosynthesis; CoA from (R)-pantothenate: step 5/5. In terms of biological role, catalyzes the phosphorylation of the 3'-hydroxyl group of dephosphocoenzyme A to form coenzyme A. The protein is Dephospho-CoA kinase of Chlamydia pneumoniae (Chlamydophila pneumoniae).